The following is a 927-amino-acid chain: Disks large homolog 1 (927 aa).

An L27 domain is found at 4-64 (RKQDTQRALH…FYEVTLLDNP (61 aa)). Position 115 is a phosphothreonine (Thr-115). Residues Ser-122, Ser-138, and Ser-158 each carry the phosphoserine modification. Positions 162–212 (PTEAVPPSSPTVPVIPVLPVPAENTVILPTIPQANPPPVLVNTDSLETSTY) are interaction with SH3 domains. Positions 224–546 (EITLERGNSG…QAVTIVAQYR (323 aa)) are required for interaction with MARCHF2. PDZ domains lie at 230-317 (GNSG…SEKI), 325-412 (GPKG…YMND), and 474-555 (TGLG…RFEA). A Phosphoserine modification is found at Ser-232. At Tyr-399 the chain carries Phosphotyrosine. Residues Ser-568, Ser-573, Ser-575, Ser-579, Ser-598, Ser-619, Ser-707, Ser-710, and Ser-857 each carry the phosphoserine modification. The SH3 domain occupies 581–651 (KRSLYVRALF…PSKRRVEKKE (71 aa)). A Guanylate kinase-like domain is found at 683–858 (RKFPFYKNKD…ISIFIKPKSM (176 aa)). Residues 691–719 (KDQSEQETSDADQHITSNASDSESSYRGQ) are disordered. A compositionally biased stretch (polar residues) spans 704 to 717 (HITSNASDSESSYR).

This sequence belongs to the MAGUK family. As to quaternary structure, homotetramer. Interacts (via guanylate kinase-like domain) with DLGAP1, DLGAP2, DLGAP3, DLGAP4 and MAP1A. Interacts (via guanylate kinase-like domain) with KIF13B. May interact with HTR2A. Interacts (via PDZ domains) with GRIA1. Interacts (via PDZ domains) with GRIN2A. Interacts (via PDZ domains) with KCND2 and KCND3. Interacts (via PDZ domains) with KCNA1, KCNA2, KCNA3 and KCNA4. Interacts (via PDZ domains) with ADGRA3. Interacts with KCNF1. Interacts with CAMK2. Interacts with cytoskeleton-associated protein EPB41. Interacts with cytoskeleton-associated protein EZR. Found in a complex with KCNA5 and CAV3. Found in a complex with APC and CTNNB1. Interacts (via PDZ domains) with APC. Interacts with CDH1 through binding to PIK3R1. Forms multiprotein complexes with CASK, LIN7A, LIN7B, LIN7C, APBA1, and KCNJ12. Interacts with TOPK. Forms a tripartite complex composed of DLG1, MPP7 and LIN7 (LIN7A or LIN7C). May interact with TJAP1. Interacts with PTEN. Interacts with FRMPD4 (via C-terminus). Interacts with LRFN1, LRFN2 and LRFN4. Interacts with SFPQ. Interacts (via PDZ domains) with ADGRA2 (via PDZ-binding motif). Interacts with ADAM10; this interaction recruits ADAM10 to the cell membrane during long-term depression in hippocampal neurons. Interacts with DGKI (via PDZ-binding motif). Interacts (via PDZ domains) with MARCHF2 (via PDZ domain); the interaction leads to DLG1 ubiqtuitination and degradation. Interacts (via N-terminus) with MPP3; this interaction connects CADM1 with DLG1 and links CADM1 with the regulatory subunit of phosphoinositide-3-kinase (PI3K) by forming a multiprotein complex and participates in cell spreading. Phosphorylated by MAPK12. Phosphorylation of Ser-232 regulates association with GRIN2A. Post-translationally, ubiquitinated; by MARCHF2 which results in its degradation.

Its subcellular location is the cell membrane. The protein localises to the basolateral cell membrane. It is found in the endoplasmic reticulum membrane. It localises to the postsynaptic density. The protein resides in the synapse. Its subcellular location is the sarcolemma. The protein localises to the apical cell membrane. It is found in the cell junction. It localises to the cytoplasm. In terms of biological role, essential multidomain scaffolding protein required for normal development. Recruits channels, receptors and signaling molecules to discrete plasma membrane domains in polarized cells. Promotes epithelial cell layer barrier function via maintaining cell-cell adhesion. May also play a role in adherens junction assembly, signal transduction, cell proliferation, synaptogenesis and lymphocyte activation. Regulates the excitability of cardiac myocytes by modulating the functional expression of Kv4 channels. Functional regulator of Kv1.5 channel. During long-term depression in hippocampal neurons, it recruits ADAM10 to the plasma membrane. The sequence is that of Disks large homolog 1 (DLG1) from Canis lupus familiaris (Dog).